The following is a 647-amino-acid chain: Macrolide export ATP-binding/permease protein MacB (647 aa).

Positions 6–244 constitute an ABC transporter domain; it reads LEISGCYRTF…VDTAVTKINN (239 aa). 42–49 is an ATP binding site; the sequence is GASGSGKS. Transmembrane regions (helical) follow at residues 273-293, 522-542, 577-597, and 612-632; these read FLTM…VALG, LLIS…VMNI, LVCL…GVVF, and SIVA…FLPA.

The protein belongs to the ABC transporter superfamily. Macrolide exporter (TC 3.A.1.122) family. As to quaternary structure, homodimer. Part of the tripartite efflux system MacAB-TolC, which is composed of an inner membrane transporter, MacB, a periplasmic membrane fusion protein, MacA, and an outer membrane component, TolC. The complex forms a large protein conduit and can translocate molecules across both the inner and outer membranes. Interacts with MacA.

The protein localises to the cell inner membrane. Its function is as follows. Part of the tripartite efflux system MacAB-TolC. MacB is a non-canonical ABC transporter that contains transmembrane domains (TMD), which form a pore in the inner membrane, and an ATP-binding domain (NBD), which is responsible for energy generation. Confers resistance against macrolides. In Shewanella sp. (strain W3-18-1), this protein is Macrolide export ATP-binding/permease protein MacB.